We begin with the raw amino-acid sequence, 342 residues long: GTPase Obg (342 aa).

The Obg domain maps to M1 to I159. One can recognise an OBG-type G domain in the interval A160–D327. GTP is bound by residues G166 to S173, F191 to H195, D212 to G215, S279 to D282, and S308 to A310. S173 and T193 together coordinate Mg(2+).

The protein belongs to the TRAFAC class OBG-HflX-like GTPase superfamily. OBG GTPase family. Monomer. The cofactor is Mg(2+).

It is found in the cytoplasm. An essential GTPase which binds GTP, GDP and possibly (p)ppGpp with moderate affinity, with high nucleotide exchange rates and a fairly low GTP hydrolysis rate. Plays a role in control of the cell cycle, stress response, ribosome biogenesis and in those bacteria that undergo differentiation, in morphogenesis control. The polypeptide is GTPase Obg (Methylobacterium radiotolerans (strain ATCC 27329 / DSM 1819 / JCM 2831 / NBRC 15690 / NCIMB 10815 / 0-1)).